The following is a 140-amino-acid chain: Ubiquitin-like protein ATG12 (140 aa).

A disordered region spans residues 1-52 (MAEEPQTVLQLPPSSAAGGEGLTDVSPETTTPEPPSSAAVSPGTEEPAGDTK). The segment covering 25-42 (VSPETTTPEPPSSAAVSP) has biased composition (low complexity). Residue Gly140 forms a Glycyl lysine isopeptide (Gly-Lys) (interchain with K-? in acceptor protein) linkage.

This sequence belongs to the ATG12 family. As to quaternary structure, forms a conjugate with ATG5. Part of the minor complex composed of 4 sets of ATG12-ATG5 and ATG16L1 (400 kDa); this complex interacts with ATG3 leading to disruption of ATG7 interaction and promotion of ATG8-like proteins lipidation. Forms an 800-kDa complex composed of ATG12-ATG5 and ATG16L2. Interacts with DHX58/RIG-1, IFIH1/MDA5 and MAVS/IPS-1 in monomeric form as well as in ATG12-ATG5 conjugate. The interaction with MAVS is further enhanced upon vesicular stomatitis virus (VSV) infection. Interacts with ATG3; this interaction is essential for phosphatidylethanolamine (PE)-conjugated ATG8-like proteins formation. Interacts with ATG7. Interacts with ATG10. Interacts with TECPR1. Interacts with SH3BGRL. The ATG12-ATG5 conjugate interacts with PDCD6IP (via the BRO1 domain); this interaction is bridged by ATG12 and promotes multiple PDCD6IP-mediated functions such as endolysosomal trafficking, macroautophagy and exosome biogenesis. In terms of processing, acetylated by EP300.

It localises to the cytoplasm. Its subcellular location is the preautophagosomal structure membrane. Its function is as follows. Ubiquitin-like protein involved in autophagy vesicles formation. Conjugation with ATG5 through a ubiquitin-like conjugating system involving also ATG7 as an E1-like activating enzyme and ATG10 as an E2-like conjugating enzyme, is essential for its function. The ATG12-ATG5 conjugate acts as an E3-like enzyme which is required for lipidation of ATG8 family proteins and their association to the vesicle membranes. The ATG12-ATG5 conjugate also negatively regulates the innate antiviral immune response by blocking the type I IFN production pathway through direct association with RARRES3 and MAVS. Also plays a role in translation or delivery of incoming viral RNA to the translation apparatus. As part of the ATG8 conjugation system with ATG5 and ATG16L1, required for recruitment of LRRK2 to stressed lysosomes and induction of LRRK2 kinase activity in response to lysosomal stress. The sequence is that of Ubiquitin-like protein ATG12 from Pongo abelii (Sumatran orangutan).